The following is a 490-amino-acid chain: POC1 centriolar protein homolog B (490 aa).

7 WD repeats span residues 16–55 (GHKDVISCADFNPNNKQLATGSCDKSLMIWNLAPKARAFR), 58–97 (GHTDVITGVNFAPSGSLVASSSRDQTVRLWTPSIKGESTV), 100–139 (AHTASVRSVHFSRDGQRLVTASDDKSVKVWGVERKKFLYS), 142–181 (RHTNWVRCARFSPDGRLIASCGDDRTVRLWDTSSHQCINI), 184–223 (DYGGSATFVDFNSSGTCIASSGADNTIKIWDIRTNKLIQH), 226–265 (VHNAGVNCFSFHPSGNYLISGSSDSTIKILDLLEGRLIYT), and 268–307 (GHKGPVLTVTFSRDGDLFASGGADSQVLMWKTNFDSLNYR). Residues 375 to 388 (DGASSSRAQFTSGM) show a composition bias toward polar residues. A disordered region spans residues 375 to 427 (DGASSSRAQFTSGMDSGPFRTHTQAREEEDENQEERFAGGMTASPAERSGIPS). Residues 431–463 (STLENIVQQLDILTQTVAVLEERLTLTEDKLRT) adopt a coiled-coil conformation.

Belongs to the WD repeat POC1 family.

The protein localises to the cytoplasm. The protein resides in the cytoskeleton. It localises to the microtubule organizing center. Its subcellular location is the centrosome. It is found in the centriole. In terms of biological role, plays an important role in centriole assembly and/or stability and ciliogenesis. Involved in early steps of centriole duplication, as well as in the later steps of centriole length control. This is POC1 centriolar protein homolog B from Danio rerio (Zebrafish).